The sequence spans 461 residues: Probable tubulin polyglutamylase TTLL9 (461 aa).

Over residues Met1–Lys10 the composition is skewed to polar residues. The tract at residues Met1–Arg20 is disordered. The region spanning Gln22–Arg402 is the TTL domain. Residues Lys149 and Gln155 to Gly156 each bind ATP. Gln155 contributes to the a protein binding site. Polar residues predominate over residues Gln186–Ser197. Positions Gln186–Asp208 are disordered. A compositionally biased stretch (basic and acidic residues) spans His198–Asp208. Residues Gln218 to Val221 and Lys231 to Asp233 each bind ATP. Arg257 is an L-glutamate binding site. Thr276–Asn277 provides a ligand contact to ATP. An L-glutamate-binding site is contributed by Lys294. The Mg(2+) site is built by Asp348, Glu361, and Asn363. L-glutamate is bound at residue Lys379.

Belongs to the tubulin--tyrosine ligase family. Requires Mg(2+) as cofactor.

The protein resides in the cytoplasm. It is found in the cytoskeleton. Its subcellular location is the cilium basal body. The protein localises to the flagellum axoneme. It catalyses the reaction (L-glutamyl)(n)-gamma-L-glutamyl-L-glutamyl-[protein] + L-glutamate + ATP = (L-glutamyl)(n+1)-gamma-L-glutamyl-L-glutamyl-[protein] + ADP + phosphate + H(+). In terms of biological role, probable tubulin polyglutamylase that generates side chains of glutamate on the gamma-carboxyl group of specific glutamate residues within the C-terminal tail of target proteins. Similar to TTLL1, may acquire enzymatic activity only in complex with other proteins as it is most likely lacking domains important for autonomous activity. Mediates tubulin polyglutamylation which induces establishment of microtubule heterogeneity in sperm flagella, thereby playing a role in normal motile flagella axoneme structure and sperm flagella beating pattern. This chain is Probable tubulin polyglutamylase TTLL9 (Ttll9), found in Rattus norvegicus (Rat).